Here is a 431-residue protein sequence, read N- to C-terminus: Serine hydroxymethyltransferase (431 aa).

Residues Leu-121 and 125-127 each bind (6S)-5,6,7,8-tetrahydrofolate; that span reads GHL. The residue at position 230 (Lys-230) is an N6-(pyridoxal phosphate)lysine. 369–371 contributes to the (6S)-5,6,7,8-tetrahydrofolate binding site; the sequence is SPF.

It belongs to the SHMT family. In terms of assembly, homodimer. Pyridoxal 5'-phosphate serves as cofactor.

The protein resides in the cytoplasm. The enzyme catalyses (6R)-5,10-methylene-5,6,7,8-tetrahydrofolate + glycine + H2O = (6S)-5,6,7,8-tetrahydrofolate + L-serine. The protein operates within one-carbon metabolism; tetrahydrofolate interconversion. It functions in the pathway amino-acid biosynthesis; glycine biosynthesis; glycine from L-serine: step 1/1. Catalyzes the reversible interconversion of serine and glycine with tetrahydrofolate (THF) serving as the one-carbon carrier. This reaction serves as the major source of one-carbon groups required for the biosynthesis of purines, thymidylate, methionine, and other important biomolecules. Also exhibits THF-independent aldolase activity toward beta-hydroxyamino acids, producing glycine and aldehydes, via a retro-aldol mechanism. This chain is Serine hydroxymethyltransferase, found in Cytophaga hutchinsonii (strain ATCC 33406 / DSM 1761 / CIP 103989 / NBRC 15051 / NCIMB 9469 / D465).